The primary structure comprises 338 residues: Methionyl-tRNA formyltransferase (338 aa).

Position 110–113 (110–113 (SLLP)) interacts with (6S)-5,6,7,8-tetrahydrofolate.

The protein belongs to the Fmt family.

The enzyme catalyses L-methionyl-tRNA(fMet) + (6R)-10-formyltetrahydrofolate = N-formyl-L-methionyl-tRNA(fMet) + (6S)-5,6,7,8-tetrahydrofolate + H(+). In terms of biological role, attaches a formyl group to the free amino group of methionyl-tRNA(fMet). The formyl group appears to play a dual role in the initiator identity of N-formylmethionyl-tRNA by promoting its recognition by IF2 and preventing the misappropriation of this tRNA by the elongation apparatus. This Parasynechococcus marenigrum (strain WH8102) protein is Methionyl-tRNA formyltransferase.